The following is a 229-amino-acid chain: Protein GrpE (229 aa).

Disordered regions lie at residues 1–49 (MTEG…SANS) and 207–229 (DSTAKTEQGELGDNVTPHKEDGD). Over residues 13–24 (TDKRRIDPDTGE) the composition is skewed to basic and acidic residues.

It belongs to the GrpE family. In terms of assembly, homodimer.

It localises to the cytoplasm. Participates actively in the response to hyperosmotic and heat shock by preventing the aggregation of stress-denatured proteins, in association with DnaK and GrpE. It is the nucleotide exchange factor for DnaK and may function as a thermosensor. Unfolded proteins bind initially to DnaJ; upon interaction with the DnaJ-bound protein, DnaK hydrolyzes its bound ATP, resulting in the formation of a stable complex. GrpE releases ADP from DnaK; ATP binding to DnaK triggers the release of the substrate protein, thus completing the reaction cycle. Several rounds of ATP-dependent interactions between DnaJ, DnaK and GrpE are required for fully efficient folding. This chain is Protein GrpE, found in Mycobacterium leprae (strain TN).